The sequence spans 570 residues: Sulfite reductase [NADPH] hemoprotein beta-component (570 aa).

Residues Cys434, Cys440, Cys479, and Cys483 each coordinate [4Fe-4S] cluster. Position 483 (Cys483) interacts with siroheme.

The protein belongs to the nitrite and sulfite reductase 4Fe-4S domain family. As to quaternary structure, alpha(8)-beta(8). The alpha component is a flavoprotein, the beta component is a hemoprotein. Siroheme serves as cofactor. [4Fe-4S] cluster is required as a cofactor.

It carries out the reaction hydrogen sulfide + 3 NADP(+) + 3 H2O = sulfite + 3 NADPH + 4 H(+). It functions in the pathway sulfur metabolism; hydrogen sulfide biosynthesis; hydrogen sulfide from sulfite (NADPH route): step 1/1. Functionally, component of the sulfite reductase complex that catalyzes the 6-electron reduction of sulfite to sulfide. This is one of several activities required for the biosynthesis of L-cysteine from sulfate. The protein is Sulfite reductase [NADPH] hemoprotein beta-component of Shigella sonnei (strain Ss046).